The sequence spans 167 residues: Male-specific protein scotti (167 aa).

Asn-30, Asn-124, and Asn-148 each carry an N-linked (GlcNAc...) asparagine glycan.

This sequence belongs to the male-specific scotti family.

Its function is as follows. Post-meiotically transcribed gene that has a role in late spermiogenesis; required for actin cone progression during spermatid individualization. In Drosophila ananassae (Fruit fly), this protein is Male-specific protein scotti.